A 237-amino-acid chain; its full sequence is MARKPGKQYQAAQKQVESKEYQLEEAIPLIKKIKFAKFDETVEVHMRLGVDPKHADQMVRGTVLMPNGLGKSKKVLVIASGDKQREATEAGADFVGGEDMVNKIQSESWTDYDAVIATPDMMRSVGKLGKVLGPRGLMPNPKTGTVTVDVAKAIAEIKAGKVEFRVDKTGIIHAPVGKISFSADKLVENASSLIAAVIKAKPAVAKGKYVRSATVCSTMGPGVAIDTAPFSVKAAAV.

This sequence belongs to the universal ribosomal protein uL1 family. Part of the 50S ribosomal subunit.

Binds directly to 23S rRNA. The L1 stalk is quite mobile in the ribosome, and is involved in E site tRNA release. Functionally, protein L1 is also a translational repressor protein, it controls the translation of the L11 operon by binding to its mRNA. This chain is Large ribosomal subunit protein uL1, found in Solibacter usitatus (strain Ellin6076).